We begin with the raw amino-acid sequence, 82 residues long: MTDLSHLARPGAEIAVRVTPRASRNAVILDGEAIRVTVTTVPEDGKANAAVVKLLAKALGVAKSRLVLVRGATARDKLFRID.

It belongs to the UPF0235 family.

In Paracoccus denitrificans (strain Pd 1222), this protein is UPF0235 protein Pden_2174.